The chain runs to 214 residues: MPEILKVKPTRMELLKLKRRVKLAERGHKLLKEKQDALIMEFFTIYDEALSMRRELIKKIGEAFEALRLAQVEVGSVRLKEIAIGVNPNKEIEVRSRNIMGVRVPLIEVPELKRKPSERGYAFISTSSAVDVAAEKFEEVLELAIRLAEVEESLKRLGKEIEKTKRRVNALEYIIIPRMKNTIKFIEQHLDEMERENFFRLKRIKALLEARESM.

This sequence belongs to the V-ATPase D subunit family. Has multiple subunits with at least A(3), B(3), C, D, E, F, H, I and proteolipid K(x).

It is found in the cell membrane. Its function is as follows. Component of the A-type ATP synthase that produces ATP from ADP in the presence of a proton gradient across the membrane. This is A-type ATP synthase subunit D from Pyrococcus furiosus (strain ATCC 43587 / DSM 3638 / JCM 8422 / Vc1).